The chain runs to 105 residues: Small ribosomal subunit protein uS10 (105 aa).

The protein belongs to the universal ribosomal protein uS10 family. In terms of assembly, part of the 30S ribosomal subunit.

In terms of biological role, involved in the binding of tRNA to the ribosomes. This chain is Small ribosomal subunit protein uS10, found in Nostoc punctiforme (strain ATCC 29133 / PCC 73102).